We begin with the raw amino-acid sequence, 428 residues long: 26S proteasome regulatory subunit 6B homolog (428 aa).

M1 bears the N-acetylmethionine mark. 213 to 220 lines the ATP pocket; the sequence is GPPGTGKT. K280 participates in a covalent cross-link: Glycyl lysine isopeptide (Lys-Gly) (interchain with G-Cter in ubiquitin).

The protein belongs to the AAA ATPase family. N-acetylated by NAT3.

It localises to the cytoplasm. The protein localises to the nucleus. Functionally, the 26S proteasome is involved in the ATP-dependent degradation of ubiquitinated proteins. The regulatory (or ATPase) complex confers ATP dependency and substrate specificity to the 26S complex. This chain is 26S proteasome regulatory subunit 6B homolog (RPT3), found in Saccharomyces cerevisiae (strain ATCC 204508 / S288c) (Baker's yeast).